Reading from the N-terminus, the 92-residue chain is Neuropeptide F (92 aa).

Residues Met-1–Ala-27 form the signal peptide. Residues Gln-28–Tyr-51 constitute a propeptide that is removed on maturation. Position 60 is a phenylalanine amide (Phe-60). The propeptide occupies Ala-64–Arg-92.

The protein belongs to the NPY family. In terms of tissue distribution, widely expressed in the nervous system. Expressed in corpora cardiaca, hypocerebral ganglion, frontal ganglion, protocerebrum, antennal lobe, tritocerebrum and thoracic ganglia. Not detected in corpora allata, pars intercerebralis, circumesophageal connectives, subesophageal ganglion, abdominal ganglion and abdominal perisympathetic organs.

The protein localises to the secreted. In terms of biological role, accelerates ovarian maturation in females. The protein is Neuropeptide F of Locusta migratoria (Migratory locust).